We begin with the raw amino-acid sequence, 554 residues long: CTP synthase (554 aa).

The interval 1 to 279 (MTSSRKVRPT…DTFIIRRLGL (279 aa)) is amidoligase domain. Serine 21 serves as a coordination point for CTP. Serine 21 contacts UTP. ATP is bound by residues 22–27 (SLGKGL) and aspartate 79. Residues aspartate 79 and glutamate 153 each contribute to the Mg(2+) site. Residues 160–162 (DIE), 200–205 (KTKPTQ), and lysine 236 contribute to the CTP site. Residues 200-205 (KTKPTQ) and lysine 236 each bind UTP. Positions 304–553 (TVGIVGKYID…VKTALELRVH (250 aa)) constitute a Glutamine amidotransferase type-1 domain. Glycine 367 is an L-glutamine binding site. Cysteine 394 acts as the Nucleophile; for glutamine hydrolysis in catalysis. L-glutamine-binding positions include 395–398 (LGLQ), glutamate 417, and arginine 478. Residues histidine 526 and glutamate 528 contribute to the active site.

It belongs to the CTP synthase family. As to quaternary structure, homotetramer.

It carries out the reaction UTP + L-glutamine + ATP + H2O = CTP + L-glutamate + ADP + phosphate + 2 H(+). The enzyme catalyses L-glutamine + H2O = L-glutamate + NH4(+). It catalyses the reaction UTP + NH4(+) + ATP = CTP + ADP + phosphate + 2 H(+). The protein operates within pyrimidine metabolism; CTP biosynthesis via de novo pathway; CTP from UDP: step 2/2. Allosterically activated by GTP, when glutamine is the substrate; GTP has no effect on the reaction when ammonia is the substrate. The allosteric effector GTP functions by stabilizing the protein conformation that binds the tetrahedral intermediate(s) formed during glutamine hydrolysis. Inhibited by the product CTP, via allosteric rather than competitive inhibition. In terms of biological role, catalyzes the ATP-dependent amination of UTP to CTP with either L-glutamine or ammonia as the source of nitrogen. Regulates intracellular CTP levels through interactions with the four ribonucleotide triphosphates. The polypeptide is CTP synthase (Corynebacterium glutamicum (strain R)).